A 218-amino-acid chain; its full sequence is NAD(P)H-quinone oxidoreductase subunit I (218 aa).

4Fe-4S ferredoxin-type domains are found at residues 55–84 and 95–124; these read GRIHYEFDKCIACEVCVRVCPINLPVVDWV and RNYSIDFGVCIFCGNCVEYCPTNCLSMTEE. Residues Cys-64, Cys-67, Cys-70, Cys-74, Cys-104, Cys-107, Cys-110, and Cys-114 each contribute to the [4Fe-4S] cluster site. Positions 192–218 are disordered; the sequence is LSLQQDSLQGDEGESLQDAPDQDQPKG.

This sequence belongs to the complex I 23 kDa subunit family. As to quaternary structure, NDH-1 is composed of at least 11 different subunits. [4Fe-4S] cluster serves as cofactor.

It is found in the cellular thylakoid membrane. It carries out the reaction a plastoquinone + NADH + (n+1) H(+)(in) = a plastoquinol + NAD(+) + n H(+)(out). The enzyme catalyses a plastoquinone + NADPH + (n+1) H(+)(in) = a plastoquinol + NADP(+) + n H(+)(out). In terms of biological role, NDH-1 shuttles electrons from an unknown electron donor, via FMN and iron-sulfur (Fe-S) centers, to quinones in the respiratory and/or the photosynthetic chain. The immediate electron acceptor for the enzyme in this species is believed to be plastoquinone. Couples the redox reaction to proton translocation, and thus conserves the redox energy in a proton gradient. This is NAD(P)H-quinone oxidoreductase subunit I from Prochlorococcus marinus (strain MIT 9303).